The chain runs to 467 residues: 2-succinylbenzoate--CoA ligase (467 aa).

Belongs to the ATP-dependent AMP-binding enzyme family. MenE subfamily.

The enzyme catalyses 2-succinylbenzoate + ATP + CoA = 2-succinylbenzoyl-CoA + AMP + diphosphate. It functions in the pathway quinol/quinone metabolism; 1,4-dihydroxy-2-naphthoate biosynthesis; 1,4-dihydroxy-2-naphthoate from chorismate: step 5/7. It participates in quinol/quinone metabolism; menaquinone biosynthesis. In terms of biological role, converts 2-succinylbenzoate (OSB) to 2-succinylbenzoyl-CoA (OSB-CoA). The protein is 2-succinylbenzoate--CoA ligase of Listeria monocytogenes serovar 1/2a (strain ATCC BAA-679 / EGD-e).